Here is a 339-residue protein sequence, read N- to C-terminus: 4-hydroxy-2-oxovalerate aldolase (339 aa).

The region spanning 8–260 (IILHDMCLRD…STDVDVFKLM (253 aa)) is the Pyruvate carboxyltransferase domain. 16 to 17 (RD) contacts substrate. Asp17 provides a ligand contact to Mn(2+). Residue His20 is the Proton acceptor of the active site. The substrate site is built by Ser170 and His199. Residues His199 and His201 each contribute to the Mn(2+) site. Residue Tyr290 coordinates substrate.

Belongs to the 4-hydroxy-2-oxovalerate aldolase family.

It catalyses the reaction (S)-4-hydroxy-2-oxopentanoate = acetaldehyde + pyruvate. This Shewanella woodyi (strain ATCC 51908 / MS32) protein is 4-hydroxy-2-oxovalerate aldolase.